The sequence spans 310 residues: tRNA-cytidine(32) 2-sulfurtransferase (310 aa).

The PP-loop motif motif lies at 47 to 52 (SGGKDS). [4Fe-4S] cluster-binding residues include Cys-122, Cys-125, and Cys-213.

The protein belongs to the TtcA family. In terms of assembly, homodimer. The cofactor is Mg(2+). Requires [4Fe-4S] cluster as cofactor.

Its subcellular location is the cytoplasm. It catalyses the reaction cytidine(32) in tRNA + S-sulfanyl-L-cysteinyl-[cysteine desulfurase] + AH2 + ATP = 2-thiocytidine(32) in tRNA + L-cysteinyl-[cysteine desulfurase] + A + AMP + diphosphate + H(+). The protein operates within tRNA modification. In terms of biological role, catalyzes the ATP-dependent 2-thiolation of cytidine in position 32 of tRNA, to form 2-thiocytidine (s(2)C32). The sulfur atoms are provided by the cysteine/cysteine desulfurase (IscS) system. This chain is tRNA-cytidine(32) 2-sulfurtransferase, found in Serratia proteamaculans (strain 568).